The sequence spans 220 residues: Metalloproteinase inhibitor 2 (220 aa).

An N-terminal signal peptide occupies residues 1–26 (MPGAALPSLLAWLAVLLLGRARPADA). C27 is a binding site for Zn(2+). Involved in metalloproteinase-binding regions lie at residues 27 to 30 (CSCS) and 95 to 96 (TE). Intrachain disulfides connect C27/C98, C29/C127, C39/C152, C154/C201, C159/C164, and C172/C193. The region spanning 27–152 (CSCSPIHPQQ…SLNQRYQMGC (126 aa)) is the NTR domain.

This sequence belongs to the protease inhibitor I35 (TIMP) family. In terms of processing, the activity of TIMP2 is dependent on the presence of disulfide bonds.

The protein resides in the secreted. Complexes with metalloproteinases (such as collagenases) and irreversibly inactivates them by binding to their catalytic zinc cofactor. The polypeptide is Metalloproteinase inhibitor 2 (TIMP2) (Gallus gallus (Chicken)).